We begin with the raw amino-acid sequence, 149 residues long: Calmodulin (149 aa).

N-acetylalanine is present on Ala-2. EF-hand domains are found at residues 8–43, 44–79, 81–116, and 117–149; these read EQVS…LGQN, PSES…KMKD, DSEE…IGEK, and LTDD…MMQK. Ca(2+) is bound by residues Asp-21, Asp-23, Asp-25, Gln-27, Glu-32, Asp-57, Asp-59, Asn-61, Thr-63, Glu-68, Asp-94, Asp-96, Asn-98, Glu-105, Asp-130, Asp-132, Asp-134, Arg-136, and Glu-141.

Belongs to the calmodulin family.

In terms of biological role, calmodulin mediates the control of a large number of enzymes, ion channels and other proteins by Ca(2+). Among the enzymes to be stimulated by the calmodulin-Ca(2+) complex are a number of protein kinases and phosphatases. This Emericella nidulans (strain FGSC A4 / ATCC 38163 / CBS 112.46 / NRRL 194 / M139) (Aspergillus nidulans) protein is Calmodulin (camA).